The sequence spans 204 residues: Small ribosomal subunit protein uS7 (204 aa).

Residue Met-1 is modified to N-acetylmethionine. The residue at position 2 (Thr-2) is an N-acetylthreonine; in 40S ribosomal protein S5, N-terminally processed. At Thr-14 the chain carries Phosphothreonine. N6-acetyllysine; alternate is present on Lys-47. Lys-47 is covalently cross-linked (Glycyl lysine isopeptide (Lys-Gly) (interchain with G-Cter in SUMO2); alternate). Residue Ser-142 is modified to Phosphoserine.

The protein belongs to the universal ribosomal protein uS7 family. Component of the small ribosomal subunit. Part of the small subunit (SSU) processome, composed of more than 70 proteins and the RNA chaperone small nucleolar RNA (snoRNA) U3.

The protein localises to the cytoplasm. It localises to the nucleus. It is found in the nucleolus. Its function is as follows. Component of the small ribosomal subunit. The ribosome is a large ribonucleoprotein complex responsible for the synthesis of proteins in the cell. Part of the small subunit (SSU) processome, first precursor of the small eukaryotic ribosomal subunit. During the assembly of the SSU processome in the nucleolus, many ribosome biogenesis factors, an RNA chaperone and ribosomal proteins associate with the nascent pre-rRNA and work in concert to generate RNA folding, modifications, rearrangements and cleavage as well as targeted degradation of pre-ribosomal RNA by the RNA exosome. The polypeptide is Small ribosomal subunit protein uS7 (Rps5) (Rattus norvegicus (Rat)).